Reading from the N-terminus, the 294-residue chain is Shikimate dehydrogenase (NADP(+)) (294 aa).

Shikimate-binding positions include 23–25 (SRS) and threonine 76. Residue lysine 80 is the Proton acceptor of the active site. The shikimate site is built by asparagine 101 and aspartate 116. NADP(+) contacts are provided by residues 141–145 (GAGGA) and methionine 233. Tyrosine 235 lines the shikimate pocket. Position 256 (glycine 256) interacts with NADP(+).

Belongs to the shikimate dehydrogenase family. As to quaternary structure, homodimer.

It carries out the reaction shikimate + NADP(+) = 3-dehydroshikimate + NADPH + H(+). It participates in metabolic intermediate biosynthesis; chorismate biosynthesis; chorismate from D-erythrose 4-phosphate and phosphoenolpyruvate: step 4/7. Its function is as follows. Involved in the biosynthesis of the chorismate, which leads to the biosynthesis of aromatic amino acids. Catalyzes the reversible NADPH linked reduction of 3-dehydroshikimate (DHSA) to yield shikimate (SA). The chain is Shikimate dehydrogenase (NADP(+)) from Methylibium petroleiphilum (strain ATCC BAA-1232 / LMG 22953 / PM1).